Here is an 864-residue protein sequence, read N- to C-terminus: Receptor like protein 24 (864 aa).

The signal sequence occupies residues Met-1 to Leu-29. Topologically, residues Leu-30–Lys-830 are extracellular. Residues Asn-61, Asn-73, Asn-94, and Asn-112 are each glycosylated (N-linked (GlcNAc...) asparagine). 15 LRR repeats span residues Phe-100–Leu-125, Lys-127–Gly-148, Leu-156–Leu-182, His-183–Asn-205, Asn-207–Asn-229, Leu-230–Leu-253, Thr-254–Phe-277, Ser-279–Ser-303, Leu-305–Leu-326, Ile-327–Pro-350, Leu-351–Pro-376, Ser-378–His-398, Leu-399–Leu-423, Gln-425–Asn-448, and Leu-449–Ile-472. Residues Asn-176, Asn-194, Asn-229, and Asn-252 are each glycosylated (N-linked (GlcNAc...) asparagine). The N-linked (GlcNAc...) asparagine glycan is linked to Asn-298. N-linked (GlcNAc...) asparagine glycosylation occurs at Asn-338. Asn-433 and Asn-448 each carry an N-linked (GlcNAc...) asparagine glycan. Residues Ile-473–Asn-492 form an LRR 16; degenerate repeat. N-linked (GlcNAc...) asparagine glycosylation is found at Asn-492 and Asn-505. LRR repeat units follow at residues Arg-493 to Leu-514, Ser-515 to Asp-538, Ser-539 to Cys-562, Ser-564 to Ala-585, Leu-586 to Pro-610, Phe-613 to Asn-637, Leu-688 to Leu-712, Lys-713 to Asn-735, Leu-736 to Leu-760, and Phe-762 to Gly-785. Asn-561 carries an N-linked (GlcNAc...) asparagine glycan. The N-linked (GlcNAc...) asparagine glycan is linked to Asn-719. Residues Ala-831 to Ala-851 traverse the membrane as a helical segment. Residues Ser-852–Phe-864 lie on the Cytoplasmic side of the membrane.

Belongs to the RLP family.

The protein resides in the cell membrane. The chain is Receptor like protein 24 from Arabidopsis thaliana (Mouse-ear cress).